We begin with the raw amino-acid sequence, 362 residues long: UPF0324 membrane protein YPO1307/y2878/YP_1285 (362 aa).

The next 9 membrane-spanning stretches (helical) occupy residues 21-38 (YIPG…ALNV), 48-70 (GLGA…YPWL), 102-124 (VADV…FILA), 139-161 (VMLI…EPVL), 168-190 (VAVA…PWLY), 240-257 (MIRV…SAYL), 278-300 (WFAV…AVWV), 305-327 (TLDT…IGSI), and 334-356 (PLLL…NLFV).

Belongs to the UPF0324 family.

Its subcellular location is the cell membrane. The polypeptide is UPF0324 membrane protein YPO1307/y2878/YP_1285 (Yersinia pestis).